Reading from the N-terminus, the 105-residue chain is Small ribosomal subunit protein uS10 (105 aa).

This sequence belongs to the universal ribosomal protein uS10 family. Part of the 30S ribosomal subunit.

Its function is as follows. Involved in the binding of tRNA to the ribosomes. This chain is Small ribosomal subunit protein uS10, found in Nitratidesulfovibrio vulgaris (strain DSM 19637 / Miyazaki F) (Desulfovibrio vulgaris).